The chain runs to 484 residues: tRNA sulfurtransferase (484 aa).

The 105-residue stretch at 63-167 (QAFGERLACI…RDKLYMVTKR (105 aa)) folds into the THUMP domain. ATP-binding positions include 185-186 (LI), K267, G289, and Q298. An intrachain disulfide couples C346 to C458. One can recognise a Rhodanese domain in the interval 406–484 (IETNEVVIDI…GYTNVKVYRP (79 aa)). C458 serves as the catalytic Cysteine persulfide intermediate.

This sequence belongs to the ThiI family.

The protein resides in the cytoplasm. It carries out the reaction [ThiI sulfur-carrier protein]-S-sulfanyl-L-cysteine + a uridine in tRNA + 2 reduced [2Fe-2S]-[ferredoxin] + ATP + H(+) = [ThiI sulfur-carrier protein]-L-cysteine + a 4-thiouridine in tRNA + 2 oxidized [2Fe-2S]-[ferredoxin] + AMP + diphosphate. It catalyses the reaction [ThiS sulfur-carrier protein]-C-terminal Gly-Gly-AMP + S-sulfanyl-L-cysteinyl-[cysteine desulfurase] + AH2 = [ThiS sulfur-carrier protein]-C-terminal-Gly-aminoethanethioate + L-cysteinyl-[cysteine desulfurase] + A + AMP + 2 H(+). The protein operates within cofactor biosynthesis; thiamine diphosphate biosynthesis. Its function is as follows. Catalyzes the ATP-dependent transfer of a sulfur to tRNA to produce 4-thiouridine in position 8 of tRNAs, which functions as a near-UV photosensor. Also catalyzes the transfer of sulfur to the sulfur carrier protein ThiS, forming ThiS-thiocarboxylate. This is a step in the synthesis of thiazole, in the thiamine biosynthesis pathway. The sulfur is donated as persulfide by IscS. The sequence is that of tRNA sulfurtransferase from Shewanella putrefaciens (strain CN-32 / ATCC BAA-453).